A 359-amino-acid chain; its full sequence is MVKLFIGNLPREATEQEIRSLFEQYGKVLECDIIKNYGFVHIEDKTAAEDAIRNLHHYKLHGVNINVEASKNKSKASTKLHVGNISPTCTNQELRAKFEEYGPVIECDIVKDYAFVHMERAEDAVEAIRGLDNTEFQGKRMHVQLSTSRLRTAPGMGDQSGCYRCGKEGHWSKECPVDRTGRVADFTEQYNEQYGAVRPPYTMGYGESMYYNDAYGALDYYKRYRVRSYEAVAAAAAASAYNYAEQTMSHLPQVQSTAVTSHLNSTSVDPYDRHLLPNSGAAATSAAMAAAAATTSSYYGRDRSPLRRAAAVLPTVGEGYGYGPESELSQASAAARNSLYDMARYEREQYVDRARYSAF.

2 consecutive RRM domains span residues 2–72 (VKLF…ASKN) and 78–148 (TKLH…LSTS). The CCHC-type zinc finger occupies 160 to 177 (SGCYRCGKEGHWSKECPV). An interaction with TNPO3 region spans residues 196–359 (AVRPPYTMGY…YVDRARYSAF (164 aa)).

As to quaternary structure, interacts with TNPO3, which may mediate nuclear import of the protein.

The protein resides in the nucleus. Its subcellular location is the nucleolus. In terms of biological role, required for the translational activation of PER1 mRNA in response to circadian clock. Binds directly to the 3'-UTR of the PER1 mRNA. The protein is RNA-binding protein 4B (RBM4B) of Sus scrofa (Pig).